The chain runs to 381 residues: Alcohol dehydrogenase class-3 (381 aa).

Residue cysteine 49 coordinates Zn(2+). Histidine 50 lines the NAD(+) pocket. The an alcohol site is built by threonine 51 and histidine 71. The Zn(2+) site is built by histidine 71, glutamate 72, cysteine 101, cysteine 104, cysteine 107, cysteine 115, and cysteine 179. NAD(+) contacts are provided by residues 204–209 (GLGTVG), aspartate 228, lysine 233, isoleucine 274, 297–299 (VGV), 322–324 (TAF), and arginine 374.

This sequence belongs to the zinc-containing alcohol dehydrogenase family. Class-III subfamily. Homodimer. Zn(2+) serves as cofactor. As to expression, expressed at low levels in the leaves.

Its subcellular location is the cytoplasm. The enzyme catalyses a primary alcohol + NAD(+) = an aldehyde + NADH + H(+). It catalyses the reaction a secondary alcohol + NAD(+) = a ketone + NADH + H(+). It carries out the reaction S-(hydroxymethyl)glutathione + NADP(+) = S-formylglutathione + NADPH + H(+). The catalysed reaction is S-(hydroxymethyl)glutathione + NAD(+) = S-formylglutathione + NADH + H(+). The sequence is that of Alcohol dehydrogenase class-3 (FDH) from Zea mays (Maize).